The chain runs to 377 residues: Succinyl-diaminopimelate desuccinylase (377 aa).

H66 contributes to the Zn(2+) binding site. Residue D68 is part of the active site. Zn(2+) is bound at residue D99. The active-site Proton acceptor is E133. E134, E162, and H348 together coordinate Zn(2+).

This sequence belongs to the peptidase M20A family. DapE subfamily. Homodimer. Requires Zn(2+) as cofactor. Co(2+) serves as cofactor.

It catalyses the reaction N-succinyl-(2S,6S)-2,6-diaminopimelate + H2O = (2S,6S)-2,6-diaminopimelate + succinate. The protein operates within amino-acid biosynthesis; L-lysine biosynthesis via DAP pathway; LL-2,6-diaminopimelate from (S)-tetrahydrodipicolinate (succinylase route): step 3/3. In terms of biological role, catalyzes the hydrolysis of N-succinyl-L,L-diaminopimelic acid (SDAP), forming succinate and LL-2,6-diaminopimelate (DAP), an intermediate involved in the bacterial biosynthesis of lysine and meso-diaminopimelic acid, an essential component of bacterial cell walls. This Histophilus somni (strain 2336) (Haemophilus somnus) protein is Succinyl-diaminopimelate desuccinylase.